An 830-amino-acid chain; its full sequence is Prolactin receptor (830 aa).

The first 23 residues, 1 to 23 (MKQKLRSSVQIILLFALTAVGLT), serve as a signal peptide directing secretion. Residues 24 to 439 (GQSYPGKPKI…QIPTDFRIKD (416 aa)) lie on the Extracellular side of the membrane. Fibronectin type-III domains lie at 30–128 (KPKI…VQPD), 129–228 (APVN…IPNG), 231–331 (PPEK…IVQT), and 333–434 (PPVN…IPTD). A disulfide bond links C36 and C46. N-linked (GlcNAc...) asparagine glycosylation is present at N59. Residues C75 and C86 are joined by a disulfide bond. 8 N-linked (GlcNAc...) asparagine glycosylation sites follow: N91, N100, N112, N132, N263, N304, N316, and N336. Zn(2+) contacts are provided by D415 and H417. The short motif at 420–424 (WSEWS) is the WSXWS motif element. The helical transmembrane segment at 440–460 (MVVWIIVGVLSSLICLVMSWT) threads the bilayer. At 461–830 (MVLKGYRMIA…DPSSFIPAFK (370 aa)) the chain is on the cytoplasmic side. Residues 472 to 480 (ILPPVPGPK) carry the Box 1 motif motif.

The protein belongs to the type I cytokine receptor family. Type 1 subfamily.

The protein resides in the membrane. Its function is as follows. This is a receptor for the anterior pituitary hormone prolactin. This chain is Prolactin receptor (PRLR), found in Columba livia (Rock dove).